Consider the following 153-residue polypeptide: MPKGTGKVLAQNRKASHDYIIEETIEAGIELKGTEIKSIRRGSANLRDSYARVYKGEVFVYNMHIAPYEEGNRFNHDPLRTRKLLLKRKQIDKLFGQTREQGYTLVPLKLYIKNGYCKMLIGVAKGKKDYDKRHALKAKEAKREMDRAMKERY.

This sequence belongs to the SmpB family.

The protein resides in the cytoplasm. In terms of biological role, required for rescue of stalled ribosomes mediated by trans-translation. Binds to transfer-messenger RNA (tmRNA), required for stable association of tmRNA with ribosomes. tmRNA and SmpB together mimic tRNA shape, replacing the anticodon stem-loop with SmpB. tmRNA is encoded by the ssrA gene; the 2 termini fold to resemble tRNA(Ala) and it encodes a 'tag peptide', a short internal open reading frame. During trans-translation Ala-aminoacylated tmRNA acts like a tRNA, entering the A-site of stalled ribosomes, displacing the stalled mRNA. The ribosome then switches to translate the ORF on the tmRNA; the nascent peptide is terminated with the 'tag peptide' encoded by the tmRNA and targeted for degradation. The ribosome is freed to recommence translation, which seems to be the essential function of trans-translation. The protein is SsrA-binding protein of Macrococcus caseolyticus (strain JCSC5402) (Macrococcoides caseolyticum).